Here is a 212-residue protein sequence, read N- to C-terminus: Imidazole glycerol phosphate synthase subunit HisH (212 aa).

Residues 1 to 212 (MLAILDYKAG…YAYCKEASRA (212 aa)) form the Glutamine amidotransferase type-1 domain. The active-site Nucleophile is cysteine 79. Residues histidine 187 and glutamate 189 contribute to the active site.

In terms of assembly, heterodimer of HisH and HisF.

Its subcellular location is the cytoplasm. It carries out the reaction 5-[(5-phospho-1-deoxy-D-ribulos-1-ylimino)methylamino]-1-(5-phospho-beta-D-ribosyl)imidazole-4-carboxamide + L-glutamine = D-erythro-1-(imidazol-4-yl)glycerol 3-phosphate + 5-amino-1-(5-phospho-beta-D-ribosyl)imidazole-4-carboxamide + L-glutamate + H(+). It catalyses the reaction L-glutamine + H2O = L-glutamate + NH4(+). It participates in amino-acid biosynthesis; L-histidine biosynthesis; L-histidine from 5-phospho-alpha-D-ribose 1-diphosphate: step 5/9. Functionally, IGPS catalyzes the conversion of PRFAR and glutamine to IGP, AICAR and glutamate. The HisH subunit catalyzes the hydrolysis of glutamine to glutamate and ammonia as part of the synthesis of IGP and AICAR. The resulting ammonia molecule is channeled to the active site of HisF. The chain is Imidazole glycerol phosphate synthase subunit HisH from Nitratidesulfovibrio vulgaris (strain DSM 19637 / Miyazaki F) (Desulfovibrio vulgaris).